Reading from the N-terminus, the 232-residue chain is U-scoloptoxin(11)-Ssd2a (232 aa).

Positions 1-21 are cleaved as a signal peptide; the sequence is MFQFCLLILLLAPGRFFSALG. The propeptide occupies 22 to 32; the sequence is KPQETLTVENR.

Post-translationally, contains 8 disulfide bonds. As to expression, expressed by the venom gland.

It localises to the secreted. This Scolopendra dehaani (Thai centipede) protein is U-scoloptoxin(11)-Ssd2a.